We begin with the raw amino-acid sequence, 339 residues long: Bifunctional phosphoglucose/phosphomannose isomerase (339 aa).

Residues 22–164 (ISVNVKAEDI…IEPVDDQIEE (143 aa)) enclose the SIS domain. Glycine 41, serine 42, serine 83, serine 85, threonine 88, and arginine 135 together coordinate D-fructose 6-phosphate. The active-site Proton acceptor is glutamate 221. Residues histidine 237 and lysine 331 each contribute to the D-fructose 6-phosphate site. Histidine 237 acts as the Proton donor in catalysis. Lysine 331 acts as the Proton acceptor in catalysis.

It belongs to the PGI/PMI family. Homodimer.

It carries out the reaction alpha-D-glucose 6-phosphate = beta-D-fructose 6-phosphate. The catalysed reaction is D-mannose 6-phosphate = D-fructose 6-phosphate. Dual specificity isomerase that catalyzes the isomerization of both glucose-6-phosphate and mannose-6-phosphate to fructose-6-phosphate. The sequence is that of Bifunctional phosphoglucose/phosphomannose isomerase from Caldicellulosiruptor bescii (strain ATCC BAA-1888 / DSM 6725 / KCTC 15123 / Z-1320) (Anaerocellum thermophilum).